Here is a 373-residue protein sequence, read N- to C-terminus: Histidinol-phosphate aminotransferase (373 aa).

Residue Lys-231 is modified to N6-(pyridoxal phosphate)lysine.

The protein belongs to the class-II pyridoxal-phosphate-dependent aminotransferase family. Histidinol-phosphate aminotransferase subfamily. It depends on pyridoxal 5'-phosphate as a cofactor.

It catalyses the reaction L-histidinol phosphate + 2-oxoglutarate = 3-(imidazol-4-yl)-2-oxopropyl phosphate + L-glutamate. The protein operates within amino-acid biosynthesis; L-histidine biosynthesis; L-histidine from 5-phospho-alpha-D-ribose 1-diphosphate: step 7/9. This is Histidinol-phosphate aminotransferase (hisC) from Methanocaldococcus jannaschii (strain ATCC 43067 / DSM 2661 / JAL-1 / JCM 10045 / NBRC 100440) (Methanococcus jannaschii).